A 213-amino-acid polypeptide reads, in one-letter code: Superoxide dismutase [Mn] (213 aa).

4 residues coordinate Mn(2+): H27, H82, D168, and H172.

It belongs to the iron/manganese superoxide dismutase family. Homodimer.

It carries out the reaction 2 superoxide + 2 H(+) = H2O2 + O2. With respect to regulation, inhibited by hydrogen peroxide. Functionally, destroys superoxide anion radicals which are normally produced within the cells and which are toxic to biological systems. This chain is Superoxide dismutase [Mn] (sodA), found in Haemophilus ducreyi (strain 35000HP / ATCC 700724).